The chain runs to 295 residues: GTPase Era (295 aa).

One can recognise an Era-type G domain in the interval 4–171 (KSGFVTIIGR…IKQIVSFLPE (168 aa)). Residues 12 to 19 (GRPNVGKS) are G1. 12 to 19 (GRPNVGKS) provides a ligand contact to GTP. Residues 38–42 (QTTRN) form a G2 region. Residues 59–62 (DTPG) form a G3 region. Residues 59–63 (DTPGI) and 121–124 (NKID) contribute to the GTP site. A G4 region spans residues 121 to 124 (NKID). A G5 region spans residues 150 to 152 (ISA). The 79-residue stretch at 202–280 (LDQEIPHGIA…FLELWVKVNE (79 aa)) folds into the KH type-2 domain.

This sequence belongs to the TRAFAC class TrmE-Era-EngA-EngB-Septin-like GTPase superfamily. Era GTPase family. Monomer.

It is found in the cytoplasm. The protein localises to the cell membrane. Its function is as follows. An essential GTPase that binds both GDP and GTP, with rapid nucleotide exchange. Plays a role in 16S rRNA processing and 30S ribosomal subunit biogenesis and possibly also in cell cycle regulation and energy metabolism. The protein is GTPase Era of Alkaliphilus metalliredigens (strain QYMF).